A 760-amino-acid polypeptide reads, in one-letter code: Catalase-peroxidase (760 aa).

Positions 1 to 22 (MSQGECPVKKVPNVAGSGTRNT) are disordered. A cross-link (tryptophyl-tyrosyl-methioninium (Trp-Tyr) (with M-268)) is located at residues 93–242 (WHSAGTYRVT…LAAAHMGLIY (150 aa)). Catalysis depends on His-94, which acts as the Proton acceptor. The segment at 206-226 (KGEGIMDGDQHKTDKSEPHTS) is disordered. Residues 213-226 (GDQHKTDKSEPHTS) show a composition bias toward basic and acidic residues. The segment at residues 242–268 (YVNPEGPEGIPDPVAAAHDIRTTFGRM) is a cross-link (tryptophyl-tyrosyl-methioninium (Tyr-Met) (with W-93)). His-283 is a heme b binding site.

It belongs to the peroxidase family. Peroxidase/catalase subfamily. In terms of assembly, homodimer or homotetramer. Heme b serves as cofactor. Post-translationally, formation of the three residue Trp-Tyr-Met cross-link is important for the catalase, but not the peroxidase activity of the enzyme.

It is found in the cytoplasm. It carries out the reaction H2O2 + AH2 = A + 2 H2O. The catalysed reaction is 2 H2O2 = O2 + 2 H2O. Functionally, bifunctional enzyme with both catalase and broad-spectrum peroxidase activity. This chain is Catalase-peroxidase, found in Pyrenophora tritici-repentis (strain Pt-1C-BFP) (Wheat tan spot fungus).